Consider the following 493-residue polypeptide: D-aminoacyl-tRNA deacylase (493 aa).

Positions 22–37 (DLGDWERRDDPSRPDA) are enriched in basic and acidic residues. Disordered stretches follow at residues 22–44 (DLGD…GTYY) and 441–493 (PEGP…EPSE).

Belongs to the DtdA deacylase family. Monomer. The cofactor is Zn(2+).

It catalyses the reaction a D-aminoacyl-tRNA + H2O = a tRNA + a D-alpha-amino acid + H(+). The enzyme catalyses glycyl-tRNA(Ala) + H2O = tRNA(Ala) + glycine + H(+). In terms of biological role, D-aminoacyl-tRNA deacylase with broad substrate specificity. By recycling D-aminoacyl-tRNA to D-amino acids and free tRNA molecules, this enzyme counteracts the toxicity associated with the formation of D-aminoacyl-tRNA entities in vivo. The polypeptide is D-aminoacyl-tRNA deacylase (Halorubrum lacusprofundi (strain ATCC 49239 / DSM 5036 / JCM 8891 / ACAM 34)).